An 860-amino-acid chain; its full sequence is Leucine--tRNA ligase (860 aa).

The 'HIGH' region motif lies at 42-52 (PYPSGRLHMGH). Residues 619–623 (KMSKS) carry the 'KMSKS' region motif. K622 contacts ATP.

Belongs to the class-I aminoacyl-tRNA synthetase family.

The protein resides in the cytoplasm. It carries out the reaction tRNA(Leu) + L-leucine + ATP = L-leucyl-tRNA(Leu) + AMP + diphosphate. The chain is Leucine--tRNA ligase from Escherichia coli O7:K1 (strain IAI39 / ExPEC).